The following is a 74-amino-acid chain: Tetrahydromethanopterin S-methyltransferase subunit G (74 aa).

Residues 50 to 70 traverse the membrane as a helical segment; that stretch reads IGILYGLVIGLYLCMLYILLG.

Belongs to the MtrG family. In terms of assembly, the complex is composed of 8 subunits; MtrA, MtrB, MtrC, MtrD, MtrE, MtrF, MtrG and MtrH.

It localises to the cell membrane. It catalyses the reaction 5-methyl-5,6,7,8-tetrahydromethanopterin + coenzyme M + 2 Na(+)(in) = 5,6,7,8-tetrahydromethanopterin + methyl-coenzyme M + 2 Na(+)(out). Its pathway is one-carbon metabolism; methanogenesis from CO(2); methyl-coenzyme M from 5,10-methylene-5,6,7,8-tetrahydromethanopterin: step 2/2. In terms of biological role, part of a complex that catalyzes the formation of methyl-coenzyme M and tetrahydromethanopterin from coenzyme M and methyl-tetrahydromethanopterin. This is an energy-conserving, sodium-ion translocating step. The polypeptide is Tetrahydromethanopterin S-methyltransferase subunit G (Methanopyrus kandleri (strain AV19 / DSM 6324 / JCM 9639 / NBRC 100938)).